We begin with the raw amino-acid sequence, 273 residues long: NAD(P)H-hydrate epimerase (273 aa).

The YjeF N-terminal domain maps to 52 to 260; that stretch reads AQQIDQELFN…GIIQKYELNL (209 aa). Residue 105 to 109 coordinates (6S)-NADPHX; that stretch reads NNGGD. 2 residues coordinate K(+): Asn106 and Asp170. Residues 174–180 and Asp203 contribute to the (6S)-NADPHX site; that span reads GFSFKGE. A K(+)-binding site is contributed by Ser206.

The protein belongs to the NnrE/AIBP family. Requires K(+) as cofactor.

It catalyses the reaction (6R)-NADHX = (6S)-NADHX. The enzyme catalyses (6R)-NADPHX = (6S)-NADPHX. Its function is as follows. Catalyzes the epimerization of the S- and R-forms of NAD(P)HX, a damaged form of NAD(P)H that is a result of enzymatic or heat-dependent hydration. This is a prerequisite for the S-specific NAD(P)H-hydrate dehydratase to allow the repair of both epimers of NAD(P)HX. This is NAD(P)H-hydrate epimerase from Branchiostoma floridae (Florida lancelet).